Consider the following 361-residue polypeptide: Protein Wnt-2 (361 aa).

Positions 1 to 27 (MNASVLGLCLSGPLVLLLAWLAPPVTS) are cleaved as a signal peptide. Disulfide bonds link cysteine 77–cysteine 88, cysteine 128–cysteine 136, cysteine 138–cysteine 158, cysteine 207–cysteine 221, cysteine 209–cysteine 216, cysteine 279–cysteine 310, cysteine 295–cysteine 305, cysteine 309–cysteine 349, cysteine 325–cysteine 340, cysteine 327–cysteine 337, and cysteine 332–cysteine 333. Serine 213 carries O-palmitoleoyl serine; by PORCN lipidation. A glycan (N-linked (GlcNAc...) asparagine) is linked at asparagine 296.

This sequence belongs to the Wnt family. Palmitoleoylation is required for efficient binding to frizzled receptors. Depalmitoleoylation leads to Wnt signaling pathway inhibition.

It is found in the secreted. It localises to the extracellular space. Its subcellular location is the extracellular matrix. Ligand for members of the frizzled family of seven transmembrane receptors. Probable developmental protein. May be a signaling molecule which affects the development of discrete regions of tissues. Is likely to signal over only few cell diameters. This is Protein Wnt-2 (WNT2) from Ornithorhynchus anatinus (Duckbill platypus).